Consider the following 85-residue polypeptide: Large ribosomal subunit protein bL31B (85 aa).

It belongs to the bacterial ribosomal protein bL31 family. Type B subfamily. In terms of assembly, part of the 50S ribosomal subunit.

In Stutzerimonas stutzeri (strain A1501) (Pseudomonas stutzeri), this protein is Large ribosomal subunit protein bL31B.